Consider the following 211-residue polypeptide: UPF0637 protein ABC2405 (211 aa).

This sequence belongs to the UPF0637 family.

The chain is UPF0637 protein ABC2405 from Shouchella clausii (strain KSM-K16) (Alkalihalobacillus clausii).